The chain runs to 333 residues: Taste receptor type 2 member 38 (333 aa).

At 1-17 (MLTLTRIHTVSYEVRST) the chain is on the extracellular side. The helical transmembrane segment at 18-38 (FLFISVLEFAVGFLTNAFVFL) threads the bilayer. The Cytoplasmic portion of the chain corresponds to 39–55 (VNFWDVVKRQPLSNSDC). The helical transmembrane segment at 56-76 (VLLCLSISRLFLHGLLFLSAI) threads the bilayer. Residues 77 to 94 (QLTHFQKLSEPLNHSYQA) lie on the Extracellular side of the membrane. Residues 95-115 (IIMLWMIANQANLWLAACLSL) form a helical membrane-spanning segment. Over 116-142 (LYCSKLIRFSHTFLICLASWVSRKISQ) the chain is Cytoplasmic. A helical transmembrane segment spans residues 143 to 163 (MLLGIILCSCICTVLCVWCFF). At 164-190 (SRPHFTVTTVLFMNNNTRLNWQIKDLN) the chain is on the extracellular side. An N-linked (GlcNAc...) asparagine glycan is attached at N178. Residues 191–211 (LFYSFLFCYLWSVPPFLLFLV) traverse the membrane as a helical segment. At 212-251 (SSGMLTVSLGRHMRTMKVYTRDSRDPSLEAHIKALKSLVS) the chain is on the cytoplasmic side. A helical transmembrane segment spans residues 252–272 (FFCFFVISSCAAFISVPLLIL). Residues 273-276 (WRDK) are Extracellular-facing. Residues 277 to 297 (IGVMVCVGIMAACPSGHAAVL) traverse the membrane as a helical segment. Over 298–333 (ISGNAKLRRAVTTILLWAQSSLKVRADHKADSRTLC) the chain is Cytoplasmic.

Belongs to the G-protein coupled receptor T2R family.

It is found in the membrane. Functionally, receptor that may play a role in the perception of bitterness and is gustducin-linked. May play a role in sensing the chemical composition of the gastrointestinal content. The activity of this receptor may stimulate alpha gustducin, mediate PLC-beta-2 activation and lead to the gating of TRPM5. This Pan troglodytes (Chimpanzee) protein is Taste receptor type 2 member 38 (TAS2R38).